The chain runs to 350 residues: Arginine N-succinyltransferase (350 aa).

Leu-125 provides a ligand contact to succinyl-CoA. His-229 (proton donor) is an active-site residue.

This sequence belongs to the arginine N-succinyltransferase family.

The catalysed reaction is succinyl-CoA + L-arginine = N(2)-succinyl-L-arginine + CoA + H(+). It functions in the pathway amino-acid degradation; L-arginine degradation via AST pathway; L-glutamate and succinate from L-arginine: step 1/5. Its function is as follows. Catalyzes the transfer of succinyl-CoA to arginine to produce N(2)-succinylarginine. The protein is Arginine N-succinyltransferase of Yersinia pseudotuberculosis serotype O:3 (strain YPIII).